A 279-amino-acid chain; its full sequence is Dermonecrotic toxin LbSicTox-alphaIB1a (279 aa).

Residue H11 is part of the active site. Positions 31 and 33 each coordinate Mg(2+). The active-site Nucleophile is the H47. Disulfide bonds link C51–C57 and C53–C196. Position 91 (D91) interacts with Mg(2+).

Belongs to the arthropod phospholipase D family. Class II subfamily. Class IIa sub-subfamily. The cofactor is Mg(2+). Expressed by the venom gland.

It is found in the secreted. The catalysed reaction is an N-(acyl)-sphingosylphosphocholine = an N-(acyl)-sphingosyl-1,3-cyclic phosphate + choline. It carries out the reaction an N-(acyl)-sphingosylphosphoethanolamine = an N-(acyl)-sphingosyl-1,3-cyclic phosphate + ethanolamine. The enzyme catalyses a 1-acyl-sn-glycero-3-phosphocholine = a 1-acyl-sn-glycero-2,3-cyclic phosphate + choline. It catalyses the reaction a 1-acyl-sn-glycero-3-phosphoethanolamine = a 1-acyl-sn-glycero-2,3-cyclic phosphate + ethanolamine. Its function is as follows. Dermonecrotic toxins cleave the phosphodiester linkage between the phosphate and headgroup of certain phospholipids (sphingolipid and lysolipid substrates), forming an alcohol (often choline) and a cyclic phosphate. This toxin acts on sphingomyelin (SM) with high activity (about 30.5-31.5 U/mg). It may also act on ceramide phosphoethanolamine (CPE), lysophosphatidylcholine (LPC) and lysophosphatidylethanolamine (LPE), but not on lysophosphatidylserine (LPS), and lysophosphatidylglycerol (LPG). It acts by transphosphatidylation, releasing exclusively cyclic phosphate products as second products. Induces dermonecrosis, hemolysis, increased vascular permeability, edema, inflammatory response, and platelet aggregation. Is lethal to mice. In Loxosceles boneti (North American fiddleback spider), this protein is Dermonecrotic toxin LbSicTox-alphaIB1a.